Consider the following 213-residue polypeptide: Uracil phosphoribosyltransferase (213 aa).

5-phospho-alpha-D-ribose 1-diphosphate contacts are provided by residues R78, R103, and D131–T139. Uracil-binding positions include I197 and G202–A204. D203 is a binding site for 5-phospho-alpha-D-ribose 1-diphosphate.

It belongs to the UPRTase family. It depends on Mg(2+) as a cofactor.

It catalyses the reaction UMP + diphosphate = 5-phospho-alpha-D-ribose 1-diphosphate + uracil. The protein operates within pyrimidine metabolism; UMP biosynthesis via salvage pathway; UMP from uracil: step 1/1. Its activity is regulated as follows. Allosterically activated by GTP. In terms of biological role, catalyzes the conversion of uracil and 5-phospho-alpha-D-ribose 1-diphosphate (PRPP) to UMP and diphosphate. The polypeptide is Uracil phosphoribosyltransferase (Bifidobacterium animalis subsp. lactis (strain AD011)).